The chain runs to 110 residues: Large ribosomal subunit protein uL22 (110 aa).

This sequence belongs to the universal ribosomal protein uL22 family. Part of the 50S ribosomal subunit.

Its function is as follows. This protein binds specifically to 23S rRNA; its binding is stimulated by other ribosomal proteins, e.g. L4, L17, and L20. It is important during the early stages of 50S assembly. It makes multiple contacts with different domains of the 23S rRNA in the assembled 50S subunit and ribosome. In terms of biological role, the globular domain of the protein is located near the polypeptide exit tunnel on the outside of the subunit, while an extended beta-hairpin is found that lines the wall of the exit tunnel in the center of the 70S ribosome. The polypeptide is Large ribosomal subunit protein uL22 (Syntrophobacter fumaroxidans (strain DSM 10017 / MPOB)).